The chain runs to 1482 residues: Cystic fibrosis transmembrane conductance regulator (1482 aa).

The Cytoplasmic segment spans residues 1–77; it reads MQRSPLEKAS…KLINALRRCF (77 aa). The helical transmembrane segment at 78–98 threads the bilayer; that stretch reads FWRFMFYGIILYLGEVTKAVQ. Residues 81–365 form the ABC transmembrane type-1 1 domain; sequence FMFYGIILYL…WAVQTWYDSL (285 aa). At 99–122 the chain is on the extracellular side; sequence PLLLGRIIASYDPDNKAERSIAIY. A helical transmembrane segment spans residues 123-146; sequence LGVGLCLLFIVRTLLLHPAIFGPH. Residues 147–195 are Cytoplasmic-facing; sequence HIGMQMRIAMFSLIYKKTLKLSSRVLDKISIGQLVSLLSNNLNKFDEGL. A helical membrane pass occupies residues 196–216; the sequence is ALAHFVWIAPLQVTLLMGLLW. Residues 217-222 are Extracellular-facing; that stretch reads ELLQAS. The chain crosses the membrane as a helical span at residues 223 to 243; that stretch reads AFCGLAFLVVLALFQAGLGKM. The Cytoplasmic portion of the chain corresponds to 244 to 298; it reads MMKYRDQRAGKINERLVITSEMIENIQSVKAYCWEEAMEKMIENLRQTELKLTRK. Residues 299–319 traverse the membrane as a helical segment; that stretch reads AAYVRYFNSSAFFFSGLFVVF. Over 320 to 339 the chain is Extracellular; it reads LSVLPYALLKGIMLRKIFTT. A helical membrane pass occupies residues 340–358; that stretch reads ISFCIVLRMAVTRQFPWAV. The Cytoplasmic segment spans residues 359 to 859; the sequence is QTWYDSLGAI…YLRYVTVHKS (501 aa). ATP is bound by residues Trp-401, Ser-434, 458–465, and Gln-493; that span reads GSTGAGKT. The ABC transporter 1 domain occupies 423–646; the sequence is NGDNSLFFSN…RPDFSSKLMG (224 aa). A lipid anchor (S-palmitoyl cysteine) is attached at Cys-524. Residues Ser-549 and Ser-660 each carry the phosphoserine modification. The disordered R region stretch occupies residues 654–832; it reads TAERRNSIIT…EEINEEDLRE (179 aa). Ser-670 carries the post-translational modification Phosphoserine; by PKA. Ser-686 bears the Phosphoserine mark. A Glycyl lysine isopeptide (Lys-Gly) (interchain with G-Cter in ubiquitin) cross-link involves residue Lys-688. A phosphoserine mark is found at Ser-700 and Ser-712. Residue Thr-717 is modified to Phosphothreonine. Residues Ser-737, Ser-768, Ser-791, Ser-796, and Ser-814 each carry the phosphoserine modification. A helical transmembrane segment spans residues 860–880; the sequence is LIFVLIWCLVVFLAEVAACLV. Positions 860–1156 constitute an ABC transmembrane type-1 2 domain; the sequence is LIFVLIWCLV…AVNSSIDVDS (297 aa). Residues 881 to 919 lie on the Extracellular side of the membrane; it reads VLCLLKKTSPQDKGNSTKGANNSYAVIITSTSAYYVFYI. Asn-895 and Asn-901 each carry an N-linked (GlcNAc...) asparagine glycan. The discontinuously helical transmembrane segment at 920 to 940 threads the bilayer; the sequence is YVGVADGLLALGLFRGLPLVH. The Cytoplasmic portion of the chain corresponds to 941–991; sequence TLITVSKILHRKMLHSVLQAPMSTLNTLKAGGILNRFSKDIAVLDDLLPLT. A helical membrane pass occupies residues 992–1012; it reads IFDFIQLLLIVIGAVAVVSVL. Residues 1013-1014 lie on the Extracellular side of the membrane; the sequence is KP. The helical transmembrane segment at 1015–1035 threads the bilayer; that stretch reads YIFLATVPVIVAFILLRAYFL. The Cytoplasmic segment spans residues 1036 to 1096; sequence HTSQQLKQLE…TANWFLYLST (61 aa). A helical transmembrane segment spans residues 1097–1117; it reads LRWFQMRIEMIFVIFFIAVTF. Residues 1118–1131 lie on the Extracellular side of the membrane; the sequence is ISILTTGEGEGTVG. A helical transmembrane segment spans residues 1132-1152; sequence IILTLAMNIMSTLQWAVNSSI. Over 1153–1482 the chain is Cytoplasmic; sequence DVDSLMRSVS…TEEEVQETRL (330 aa). One can recognise an ABC transporter 2 domain in the interval 1212–1445; the sequence is MTVKDLTAKY…KSLFRQAISP (234 aa). ATP is bound by residues Tyr-1221 and 1246–1253; that span reads GRTGSGKS. The interaction with GORASP2 stretch occupies residues 1388-1482; the sequence is RTLKQAFADC…TEEEVQETRL (95 aa). Residue Cys-1397 is the site of S-palmitoyl cysteine attachment. Residues 1454–1464 show a composition bias toward basic residues; it reads HRNSSKQRSRS. The disordered stretch occupies residues 1454 to 1482; sequence HRNSSKQRSRSKIAALKEETEEEVQETRL. Phosphoserine is present on Ser-1458. A compositionally biased stretch (acidic residues) spans 1472-1482; it reads ETEEEVQETRL. A PDZ-binding motif is present at residues 1480–1482; the sequence is TRL.

Belongs to the ABC transporter superfamily. ABCC family. CFTR transporter (TC 3.A.1.202) subfamily. In terms of assembly, monomer; does not require oligomerization for channel activity. May form oligomers in the membrane. Interacts with SLC26A3, SLC26A6 and NHERF1. Interacts with SHANK2. Interacts with MYO6. Interacts (via C-terminus) with GOPC (via PDZ domain); this promotes CFTR internalization and thereby decreases channel activity. Interacts with SLC4A7 through NHERF1. Found in a complex with MYO5B and RAB11A. Interacts with ANO1. Interacts with SLC26A8. Interacts with AHCYL1; the interaction increases CFTR activity. Interacts with CSE1L. The core-glycosylated form interacts with GORASP2 (via PDZ GRASP-type 1 domain) in respone to ER stress. Interacts with MARCHF2; the interaction leads to CFTR ubiqtuitination and degradation. Interacts with ADGRG2. Post-translationally, N-glycosylated. Phosphorylated; cAMP treatment promotes phosphorylation and activates the channel. Dephosphorylation decreases the ATPase activity (in vitro). Phosphorylation at PKA sites activates the channel. Phosphorylation at PKC sites enhances the response to phosphorylation by PKA. Phosphorylated by AMPK; this inhibits channel activity. In terms of processing, ubiquitinated, leading to its degradation in the lysosome. Deubiquitination by USP10 in early endosomes enhances its endocytic recycling to the cell membrane. Ubiquitinated by RNF185 during ER stress. Ubiquitinated by MARCHF2.

It localises to the apical cell membrane. The protein localises to the early endosome membrane. Its subcellular location is the cell membrane. The protein resides in the recycling endosome membrane. It is found in the endoplasmic reticulum membrane. It localises to the nucleus. It carries out the reaction ATP + H2O + closed Cl(-) channel = ADP + phosphate + open Cl(-) channel.. It catalyses the reaction chloride(in) = chloride(out). The enzyme catalyses hydrogencarbonate(in) = hydrogencarbonate(out). The catalysed reaction is ATP + H2O = ADP + phosphate + H(+). Epithelial ion channel that plays an important role in the regulation of epithelial ion and water transport and fluid homeostasis. Mediates the transport of chloride ions across the cell membrane. Possesses an intrinsic ATPase activity and utilizes ATP to gate its channel; the passive flow of anions through the channel is gated by cycles of ATP binding and hydrolysis by the ATP-binding domains. The ion channel is also permeable to HCO(3)(-); selectivity depends on the extracellular chloride concentration. Exerts its function also by modulating the activity of other ion channels and transporters. Contributes to the regulation of the pH and the ion content of the epithelial fluid layer. Modulates the activity of the epithelial sodium channel (ENaC) complex, in part by regulating the cell surface expression of the ENaC complex. May regulate bicarbonate secretion and salvage in epithelial cells by regulating the transporter SLC4A7. Can inhibit the chloride channel activity of ANO1. Plays a role in the chloride and bicarbonate homeostasis during sperm epididymal maturation and capacitation. The polypeptide is Cystic fibrosis transmembrane conductance regulator (Sus scrofa (Pig)).